The chain runs to 200 residues: Nucleoplasmin (200 aa).

Ala-2 is subject to N-acetylalanine. At Ser-3 the chain carries Phosphoserine. The residue at position 4 (Thr-4) is a Phosphothreonine. A Phosphoserine modification is found at Ser-6. Thr-8 is subject to Phosphothreonine. The acidic tract A1 stretch occupies residues 35–39 (EDDEE). Over residues 123–148 (DYSWAEEEDEGEAEGEEEEEEEEDQE) the composition is skewed to acidic residues. Residues 123–200 (DYSWAEEEDE…GRGRKPAAKK (78 aa)) are disordered. The tract at residues 128-148 (EEEDEGEAEGEEEEEEEEDQE) is acidic tract A2. Phosphoserine is present on Ser-149. The segment covering 153–170 (AVKRPAATKKAGQAKKKK) has biased composition (basic residues). The Bipartite nuclear localization signal motif lies at 155–170 (KRPAATKKAGQAKKKK). The segment at 174–176 (EDE) is acidic tract A3. 3 positions are modified to phosphoserine: Ser-177, Ser-178, and Ser-182. The segment covering 185-200 (KKGKGAGRGRKPAAKK) has biased composition (basic residues). At Arg-192 the chain carries Omega-N-methylarginine; by PRMT5; alternate. A Symmetric dimethylarginine; by PRMT5; alternate modification is found at Arg-192.

This sequence belongs to the nucleoplasmin family. Homopentamer, when bound to H2A-H2B dimers only. Homodecamer of two stacked pentamers, when bound to H2A-H2B dimers and H3-H4 tetramers simultaneously. Interacts with the heterotetramer formed by wdr77 and prmt5. In terms of processing, activated by phosphorylation of multiple serine/threonine residues, along both core and tail domains. The level of phosphorylation gradually increases during egg maturation, reaching an average of 7-10 phosphates per monomer, so that at the time of fertilization the activity of the protein is maximum. Post-translationally, methylated by prmt5, yielding both monomethylated and symmetrically dimethylated Arg-192.

It is found in the nucleus. Acts as a chaperone for histones, such as histone H2A-H2B, and thus regulates the assembly of nucleosome cores. Involved in chromatin remodeling, especially during fertilization and early embryonic development. May be involved in sperm chromatin decondensation during fertilization. The protein is Nucleoplasmin of Xenopus laevis (African clawed frog).